The following is a 341-amino-acid chain: Heme A synthase (341 aa).

The next 8 membrane-spanning stretches (helical) occupy residues 7-27 (VTVWLGVCCSMTLLMVVIGGI), 92-112 (LFGRALGAVFCLPIPYFAITK), 118-138 (MVAKLLMVALLGGMQGAMGWF), 159-179 (LFLTILLFSILWHSFLRCAGV), 190-210 (FFTAAAVVGLTVLQMVLGALV), 253-273 (FLHRLVAVLIVVCAAPLPFWL), 280-300 (LFLACVALQFLLGVATLVSVV), and 302-322 (IFLAAMHQVFGFVTLAAGVHM). H255 provides a ligand contact to heme. H308 is a binding site for heme.

It belongs to the COX15/CtaA family. Type 2 subfamily. As to quaternary structure, interacts with CtaB. Requires heme b as cofactor.

Its subcellular location is the cell membrane. It carries out the reaction Fe(II)-heme o + 2 A + H2O = Fe(II)-heme a + 2 AH2. It participates in porphyrin-containing compound metabolism; heme A biosynthesis; heme A from heme O: step 1/1. Functionally, catalyzes the conversion of heme O to heme A by two successive hydroxylations of the methyl group at C8. The first hydroxylation forms heme I, the second hydroxylation results in an unstable dihydroxymethyl group, which spontaneously dehydrates, resulting in the formyl group of heme A. This chain is Heme A synthase, found in Anaplasma marginale (strain Florida).